The sequence spans 320 residues: Olfactory receptor 52N1 (320 aa).

Topologically, residues 1–27 (MSFLNGTSLTPASFILNGIPGLEDVHL) are extracellular. Asn-5 is a glycosylation site (N-linked (GlcNAc...) asparagine). Residues 28–48 (WISFPLCTMYSIAITGNFGLM) traverse the membrane as a helical segment. Residues 49 to 56 (YLIYCDEA) are Cytoplasmic-facing. A helical membrane pass occupies residues 57–77 (LHRPMYVFLALLSFTDVLMCT). The Extracellular segment spans residues 78–101 (STLPNTLFILWFNLKEIDFKACLA). A disulfide bridge connects residues Cys-99 and Cys-191. Residues 102–122 (QMFFVHTFTGMESGVLMLMAL) form a helical membrane-spanning segment. The Cytoplasmic portion of the chain corresponds to 123–141 (DHCVAICFPLRYATILTNS). A helical membrane pass occupies residues 142–162 (VIAKAGFLTFLRGVMLVIPST). Topologically, residues 163–198 (FLTKRLPYCKGNVIPHTYCDHMSVAKISCGNVRVNA) are extracellular. Residues 199 to 219 (IYGLIVALLIGGFDILCITIS) form a helical membrane-spanning segment. Topologically, residues 220 to 239 (YTMILQAVVSLSSADARQKA) are cytoplasmic. The helical transmembrane segment at 240–260 (FSTCTAHFCAIVLTYVPAFFT) threads the bilayer. Over 261 to 276 (FFTHHFGGHTIPLHIH) the chain is Extracellular. A helical transmembrane segment spans residues 277–297 (IIMANLYLLMPPTMNPIVYGV). At 298–320 (KTRQVRESVIRFFLKGKDNSHNF) the chain is on the cytoplasmic side.

This sequence belongs to the G-protein coupled receptor 1 family.

Its subcellular location is the cell membrane. Functionally, odorant receptor. This is Olfactory receptor 52N1 (OR52N1) from Homo sapiens (Human).